Consider the following 356-residue polypeptide: Protein MGF 360-10L (356 aa).

The stretch at 58 to 90 (DLNTALMIAAKENNYQLIKLFTEWGANINYGYI) is one ANK repeat. N-linked (GlcNAc...) asparagine; by host glycosylation is present at Asn125. The next 2 helical transmembrane spans lie at 206 to 228 (LNTWWLICALCFNKLFDLHYLYE) and 249 to 271 (NFLTMYYCFILGADINMAMLAAI). N-linked (GlcNAc...) asparagine; by host glycosylation is present at Asn352.

This sequence belongs to the asfivirus MGF 360 family.

It is found in the host membrane. Functionally, plays a role in virus cell tropism, and may be required for efficient virus replication in macrophages. The polypeptide is Protein MGF 360-10L (Ornithodoros (relapsing fever ticks)).